The primary structure comprises 330 residues: uncharacterized protein (330 aa).

Helical transmembrane passes span 27 to 47 (MGAYVSLAAAMAIVGSSVVVG), 56 to 76 (VFLSSGLRFLIASVVLLMLLF), 90 to 110 (VFVLLVQSFTGVFLFSICLLY), 119 to 139 (ESGILTSTTPMLIGILSFFLL), 147 to 167 (TLIGILLAVCGVMAINLFGAG), 176 to 196 (LFGNMLIIAAVIGEALFTLMA), 206 to 226 (LAISTFVSLFGFLFFLPFALF), 243 to 263 (YVLYYALFVTVLAFYLWYSGV), 270 to 290 (VSGIFTSVLPVSAVILSGVIL), and 294 to 314 (FEFVHFIGIACVIGGIFVTVI). EamA domains follow at residues 38–163 (AIVG…AINL) and 187–314 (IGEA…VTVI).

Belongs to the EamA transporter family.

Its subcellular location is the cell membrane. This is an uncharacterized protein from Bacillus subtilis (strain 168).